A 191-amino-acid chain; its full sequence is Inosine triphosphate pyrophosphatase (191 aa).

12 to 17 (TGNANK) is an ITP binding site. E42 is a binding site for Mg(2+). Residues K54, 70 to 71 (DT), K87, 145 to 148 (FGWD), K168, and 173 to 174 (HR) contribute to the ITP site.

It belongs to the HAM1 NTPase family. As to quaternary structure, homodimer. Mg(2+) is required as a cofactor. It depends on Mn(2+) as a cofactor.

The protein localises to the cytoplasm. The enzyme catalyses ITP + H2O = IMP + diphosphate + H(+). It catalyses the reaction dITP + H2O = dIMP + diphosphate + H(+). The catalysed reaction is XTP + H2O = XMP + diphosphate + H(+). Pyrophosphatase that hydrolyzes non-canonical purine nucleotides such as inosine triphosphate (ITP), deoxyinosine triphosphate (dITP) or xanthosine 5'-triphosphate (XTP) to their respective monophosphate derivatives. The enzyme does not distinguish between the deoxy- and ribose forms. Probably excludes non-canonical purines from RNA and DNA precursor pools, thus preventing their incorporation into RNA and DNA and avoiding chromosomal lesions. The sequence is that of Inosine triphosphate pyrophosphatase from Phytophthora infestans (strain T30-4) (Potato late blight agent).